Consider the following 262-residue polypeptide: MILDDLVAATCQNMLARQAQKSLHDLQKEAAHITVSREFPFEKSLAQQKISVVAEIKQASPSKGQIVPSSEFDYQGIAKDYEVAGVDAISVLTEENYFKGSLDILKTVAADSATPVLRKDFTIDPYMIYEAKVAGSQIILLIVAILTDEQLKEYLSLANELGLSVIVEAHNEEEILRAVKANARIIGVNNRNLKDFTVDFDNTKRLRQLVPPEILFISESGIKDRSDVVTLEQIGVDGILVGETFMKAADKLAAIQQLRGEK.

Belongs to the TrpC family.

It carries out the reaction 1-(2-carboxyphenylamino)-1-deoxy-D-ribulose 5-phosphate + H(+) = (1S,2R)-1-C-(indol-3-yl)glycerol 3-phosphate + CO2 + H2O. The protein operates within amino-acid biosynthesis; L-tryptophan biosynthesis; L-tryptophan from chorismate: step 4/5. The sequence is that of Indole-3-glycerol phosphate synthase from Leuconostoc mesenteroides subsp. mesenteroides (strain ATCC 8293 / DSM 20343 / BCRC 11652 / CCM 1803 / JCM 6124 / NCDO 523 / NBRC 100496 / NCIMB 8023 / NCTC 12954 / NRRL B-1118 / 37Y).